The following is a 430-amino-acid chain: Ribosomal protein uS12 methylthiotransferase RimO (430 aa).

The MTTase N-terminal domain maps to 2 to 119 (ISVYSISLGC…WPAMLAHALK (118 aa)). [4Fe-4S] cluster is bound by residues Cys-11, Cys-46, Cys-81, Cys-145, Cys-149, and Cys-152. The Radical SAM core domain maps to 131–361 (STGPSYAWLK…MEVQAEISEE (231 aa)). In terms of domain architecture, TRAM spans 364–430 (AVHEGTRQQV…TRTYDLVALV (67 aa)).

It belongs to the methylthiotransferase family. RimO subfamily. [4Fe-4S] cluster serves as cofactor.

The protein resides in the cytoplasm. It carries out the reaction L-aspartate(89)-[ribosomal protein uS12]-hydrogen + (sulfur carrier)-SH + AH2 + 2 S-adenosyl-L-methionine = 3-methylsulfanyl-L-aspartate(89)-[ribosomal protein uS12]-hydrogen + (sulfur carrier)-H + 5'-deoxyadenosine + L-methionine + A + S-adenosyl-L-homocysteine + 2 H(+). Functionally, catalyzes the methylthiolation of an aspartic acid residue of ribosomal protein uS12. The chain is Ribosomal protein uS12 methylthiotransferase RimO from Nitratidesulfovibrio vulgaris (strain DP4) (Desulfovibrio vulgaris).